The primary structure comprises 340 residues: Guanine nucleotide-binding protein G(I)/G(S)/G(T) subunit beta-1 (340 aa).

WD repeat units follow at residues 53–83 (GHLAKIYAMHWGTDSRLLVSASQDGKLIIWD), 95–125 (LRSSWVMTCAYAPSGNYVACGGLDNICPIYN), 141–170 (GHTGYLSCCRFLDDNQIITSSGDTTCALWD), 182–212 (GHTGDVMSLSLAPDSRCFVSGACDASAKLWD), 224–254 (GHESDINAICFFPNGNAFATGSDDATCRLFD), 268–298 (NIICGITSVAFSKSGRLLLAGYDDFNCNVWD), and 310–340 (GHDNRVSCLGVTDDGMAVATGSWDSFLKIWN).

The protein belongs to the WD repeat G protein beta family. G proteins are composed of 3 units, alpha, beta and gamma.

In terms of biological role, guanine nucleotide-binding proteins (G proteins) are involved as a modulator or transducer in various transmembrane signaling systems. The beta and gamma chains are required for the GTPase activity, for replacement of GDP by GTP, and for G protein-effector interaction. The sequence is that of Guanine nucleotide-binding protein G(I)/G(S)/G(T) subunit beta-1 (gnb1) from Xenopus laevis (African clawed frog).